Here is an 88-residue protein sequence, read N- to C-terminus: Large ribosomal subunit protein bL27 (88 aa).

Positions 1-24 (MAHKKAGGSSRNGRDSAGQRRGVK) are disordered.

Belongs to the bacterial ribosomal protein bL27 family.

This is Large ribosomal subunit protein bL27 from Syntrophobacter fumaroxidans (strain DSM 10017 / MPOB).